The sequence spans 262 residues: Taurine import ATP-binding protein TauB (262 aa).

Positions 4-234 constitute an ABC transporter domain; that stretch reads VDHASVFFAA…RFAETGDARS (231 aa). 39 to 46 lines the ATP pocket; that stretch reads GASGCGKS.

The protein belongs to the ABC transporter superfamily. Taurine importer (TC 3.A.1.17.1) family. As to quaternary structure, the complex is composed of two ATP-binding proteins (TauB), two transmembrane proteins (TauC) and a solute-binding protein (TauA).

It is found in the cell inner membrane. It catalyses the reaction taurine(out) + ATP + H2O = taurine(in) + ADP + phosphate + H(+). Functionally, part of the ABC transporter complex TauABC involved in taurine import. Responsible for energy coupling to the transport system. This Rhizobium johnstonii (strain DSM 114642 / LMG 32736 / 3841) (Rhizobium leguminosarum bv. viciae) protein is Taurine import ATP-binding protein TauB.